A 254-amino-acid polypeptide reads, in one-letter code: TLC domain-containing protein At5g14285 (254 aa).

6 consecutive transmembrane segments (helical) span residues 12-32, 45-65, 82-101, 124-144, 172-192, and 211-231; these read DLPI…FIVF, SCLI…RAVF, TVLD…YIVF, FLVF…EVTS, LSPP…PLFF, and WLWI…ILWI. In terms of domain architecture, TLC spans 38-248; the sequence is QIRPEASSCL…FSERKANKIR (211 aa).

It localises to the membrane. This is TLC domain-containing protein At5g14285 from Arabidopsis thaliana (Mouse-ear cress).